A 210-amino-acid chain; its full sequence is MSRKHLTARQQEIFDFVKHHIETTGMPPTRVEIAREIGFKSPNAAEEHLKALARKGYIEMLSGTSRGIRILVDNEETAANDDGLPLIGKVAAGTPIMAIEHVESHYPVNGAMFNPNADYLLKVNGNSMEKIGILDGDLLAVHKTNFARNGQVVVARVDDEVTVKRLEKKGDLIYLHPENDELQPIIVDPRIEYIEIEGIAVGVIRNNAWM.

Residues Arg-30 to Lys-50 constitute a DNA-binding region (H-T-H motif). Active-site for autocatalytic cleavage activity residues include Ser-127 and Lys-164.

Belongs to the peptidase S24 family. In terms of assembly, homodimer.

The enzyme catalyses Hydrolysis of Ala-|-Gly bond in repressor LexA.. Represses a number of genes involved in the response to DNA damage (SOS response), including recA and lexA. In the presence of single-stranded DNA, RecA interacts with LexA causing an autocatalytic cleavage which disrupts the DNA-binding part of LexA, leading to derepression of the SOS regulon and eventually DNA repair. The sequence is that of LexA repressor from Actinobacillus pleuropneumoniae serotype 5b (strain L20).